The primary structure comprises 90 residues: Cell division topological specificity factor (90 aa).

A disordered region spans residues 1–21; it reads MAGFWSKIFGNDEKPSSAQTA. Positions 10-21 are enriched in basic and acidic residues; the sequence is GNDEKPSSAQTA.

Belongs to the MinE family.

Functionally, prevents the cell division inhibition by proteins MinC and MinD at internal division sites while permitting inhibition at polar sites. This ensures cell division at the proper site by restricting the formation of a division septum at the midpoint of the long axis of the cell. This chain is Cell division topological specificity factor, found in Acinetobacter baylyi (strain ATCC 33305 / BD413 / ADP1).